Here is a 751-residue protein sequence, read N- to C-terminus: Dachshund homolog 1 (751 aa).

A disordered region spans residues 1-178 (MAVPAALIPP…PSPVENTPQN (178 aa)). Low complexity-rich tracts occupy residues 20-53 (ISTSASSSGTTTSTSSATSSPAPSIGPPASSGPT) and 61-74 (ASSASSSAAATVTS). Composition is skewed to gly residues over residues 75 to 97 (PGGGGGGSGGGGGSGGNGGGGGS) and 107 to 119 (SSGGGVSAGGGGA). Residues 120–156 (SSTPITASTGSSSSSSSSSSSSSSSSSSSSSSSSSSS) are compositionally biased toward low complexity. Polar residues predominate over residues 167–178 (STPSPVENTPQN). The segment at 182–268 (KMVDLRGAKV…LISRKDFETL (87 aa)) is DACHbox-N. Residues 182–377 (KMVDLRGAKV…VGSSGGSWDK (196 aa)) form an interaction with SIX6 and HDAC3 region. 4 disordered regions span residues 273–295 (TNASSRPGRPPKRTQSVTSPENS), 351–393 (SNNQ…APVA), 467–525 (SPPS…RIPV), and 537–556 (MGLSPNVLPGPKEGDLAGHD). 2 stretches are compositionally biased toward polar residues: residues 285–294 (RTQSVTSPEN) and 351–369 (SNNQHGADSENGDMNSSVG). Residue S484 is modified to Phosphoserine. The segment covering 499-517 (SHPSSHRSSSVSSSPARTE) has biased composition (low complexity). Positions 609-689 (SSIETLLTNI…KAKRKLQEAL (81 aa)) are DACHbox-C. The interval 620-699 (GLLKVAIDNA…EFETKRREQA (80 aa)) is interaction with SIN3A. The stretch at 623–711 (KVAIDNARAQ…TLKQAASADS (89 aa)) forms a coiled coil.

This sequence belongs to the DACH/dachshund family. Interacts with SIX1, SIX6 and EYA3. Interacts with NCOR1 and HDAC3 through its N-terminus. Interacts with SIN3A through its C-terminus. Interacts with SMAD3 and SMAD4. In terms of tissue distribution, expressed at higher levels in adult kidney and lung, and at lower levels in brain and testis. Expressed in embryonal kidneys, eyes, cochleae and limb buds.

Its subcellular location is the nucleus. In terms of biological role, transcription factor that is involved in regulation of organogenesis. Seems to be a regulator of SIX1, SIX6 and probably SIX5. Corepression of precursor cell proliferation in myoblasts by SIX1 is switched to coactivation through recruitment of EYA3 to the SIX1-DACH1 complex. Transcriptional activation also seems to involve association of CREBBP. Seems to act as a corepressor of SIX6 in regulating proliferation by directly repressing cyclin-dependent kinase inhibitors, including the p27Kip1 promoter. Inhibits TGF-beta signaling through interaction with SMAD4 and NCOR1. Binds to chromatin DNA via its DACHbox-N domain. The protein is Dachshund homolog 1 (Dach1) of Mus musculus (Mouse).